We begin with the raw amino-acid sequence, 137 residues long: Proofreading thioesterase EntH (137 aa).

Glutamate 63 (nucleophile or proton acceptor) is an active-site residue.

It belongs to the thioesterase PaaI family. As to quaternary structure, homotetramer. Dimer of dimers. Interacts specifically with the aryl carrier protein (ArCP) domain of EntB.

It is found in the cytoplasm. Its pathway is siderophore biosynthesis; enterobactin biosynthesis. In terms of biological role, required for optimal enterobactin synthesis. Acts as a proofreading enzyme that prevents EntB misacylation by hydrolyzing the thioester bound existing between EntB and wrongly charged molecules. The polypeptide is Proofreading thioesterase EntH (Escherichia coli O157:H7 (strain EC4115 / EHEC)).